We begin with the raw amino-acid sequence, 294 residues long: ATP synthase gamma chain (294 aa).

Belongs to the ATPase gamma chain family. F-type ATPases have 2 components, CF(1) - the catalytic core - and CF(0) - the membrane proton channel. CF(1) has five subunits: alpha(3), beta(3), gamma(1), delta(1), epsilon(1). CF(0) has three main subunits: a, b and c.

Its subcellular location is the cell membrane. In terms of biological role, produces ATP from ADP in the presence of a proton gradient across the membrane. The gamma chain is believed to be important in regulating ATPase activity and the flow of protons through the CF(0) complex. This Opitutus terrae (strain DSM 11246 / JCM 15787 / PB90-1) protein is ATP synthase gamma chain.